Reading from the N-terminus, the 25-residue chain is NU-conotoxin-Ltg1a (25 aa).

Post-translationally, contains 2 disulfide bonds. However, cysteine pairing is not critical for peptide binding to melanocortin receptors, since peptides with different pairings have similar potency at the receptors tested. Expressed by the venom duct.

It localises to the secreted. Peptide with nanomolar affinity for human melanocortin receptors. The natural disulfide pairing being unknown, the activity of all three possible peptides (with the cysteine pairings 'bead (I-II, III-IV), 'globular' (I-III, II-IV), and 'ribbon' (I-IV, II-III)) have been tested. All three isomers show similar affinities on each human melanocortin subtype (MC1R (~500 nM), MC3R (~100 nM), MC4R (~50 nM), and MC5R (~50 nM)). This chain is NU-conotoxin-Ltg1a, found in Conus litoglyphus (Lithograph cone).